Here is a 342-residue protein sequence, read N- to C-terminus: Cystein proteinase inhibitor protein salarin (342 aa).

An N-terminal signal peptide occupies residues 1–19; sequence MKSLVLLLLVAVTVSSVVS. An N-linked (GlcNAc) asparagine glycan is attached at N153. T184 carries O-linked (GlcNAc) threonine glycosylation.

N-glycosylated, with sialylated biantennary complex-type glycans. In terms of processing, O-glycosylated, with sialylated oligosaccharides. In terms of tissue distribution, expressed in the skin, liver. intestine, spleen, pancreas and kidney.

The protein localises to the cytoplasm. The protein resides in the vacuole. Inhibits papain and ficin (cysteine proteinases) but not trypsin (a serine proteinase). The protein is Cystein proteinase inhibitor protein salarin (salarin) of Salmo salar (Atlantic salmon).